Consider the following 582-residue polypeptide: Vacuolar basic amino acid transporter 5 (582 aa).

At 1–44 (MEETKYSSQQEIEGACGSDASLNARGSNDSPMGLSLYLCLASLT) the chain is on the cytoplasmic side. Residues 45 to 65 (LVLFITALDILIVGTIIDVVA) form a helical membrane-spanning segment. The Vacuolar portion of the chain corresponds to 66–80 (EQFGNYSKTGWLVTG). The N-linked (GlcNAc...) asparagine glycan is linked to asparagine 70. Residues 81–101 (YSLPNAILSLIWGRFASIIGF) form a helical membrane-spanning segment. The Cytoplasmic segment spans residues 102 to 104 (QHS). Residues 105–125 (LILAILIFEAGSLIAALASSM) traverse the membrane as a helical segment. At 126–132 (NMLIFGR) the chain is on the vacuolar side. Residues 133-153 (VVAGVGGSGLQTLCFVIGCTM) traverse the membrane as a helical segment. Residues 154–160 (VGERSRP) lie on the Cytoplasmic side of the membrane. Residues 161–181 (LVISILSCAFAVAAIVGPIIG) traverse the membrane as a helical segment. The Vacuolar segment spans residues 182–191 (GAFTTHVTWR). Residues 192 to 212 (WCFYINLPIGGLAIIMFLLTY) traverse the membrane as a helical segment. Over 213–256 (KAENKGILQQIKDAIGTISSFTFSKFRHQVNFKRLMNGIIFKFD) the chain is Cytoplasmic. Residues 257 to 277 (FFGFALCSAGLVLFLLGLTFG) form a helical membrane-spanning segment. Residues 278 to 287 (GNKYSWNSGQ) are Vacuolar-facing. Residues 288–308 (VITYLVLGVLLFIFSLVYDFF) form a helical membrane-spanning segment. The Cytoplasmic portion of the chain corresponds to 309–329 (LFDKFNPEPDNISYRPLLLRR). The helical transmembrane segment at 330–350 (LVAKPAIIIVNMVTFLLCTGY) threads the bilayer. Topologically, residues 351–372 (NGQMIYSVQFFQLIFASSAWKA) are vacuolar. The chain crosses the membrane as a helical span at residues 373–393 (GLHLIPIVITNVIAAIASGVI). Topologically, residues 394 to 401 (TKKLGLVK) are cytoplasmic. The chain crosses the membrane as a helical span at residues 402–422 (PLLIFGGVLGVIGAGLMTLMT). The N-linked (GlcNAc...) asparagine glycan is linked to asparagine 423. Topologically, residues 423 to 430 (NTSTKSTQ) are vacuolar. Residues 431–451 (IGVLLLPGFSLGFALQASLMS) traverse the membrane as a helical segment. Topologically, residues 452 to 469 (AQLQITKDRPEAAMDFIE) are cytoplasmic. Residues 470-492 (VTAFNTFMKSLGTTLGGVLSTTV) form a helical membrane-spanning segment. The Vacuolar portion of the chain corresponds to 493-539 (FSASFHNKVSRAHLEPYEGKTVDDMILYRLQNYDGSHSTIGNILSDS). Residues 540 to 560 (IKNVFWMDLGFYALGFLFCSF) form a helical membrane-spanning segment. Residues 561 to 582 (SSNKKLIIPKKDDTPEDNLEDK) are Cytoplasmic-facing.

It belongs to the major facilitator superfamily.

It localises to the vacuole membrane. Functionally, transporter required for vacuolar uptake of basic amino acids. This chain is Vacuolar basic amino acid transporter 5 (VBA5), found in Saccharomyces cerevisiae (strain ATCC 204508 / S288c) (Baker's yeast).